Consider the following 298-residue polypeptide: GTP cyclohydrolase FolE2 (298 aa).

The protein belongs to the GTP cyclohydrolase IV family.

It carries out the reaction GTP + H2O = 7,8-dihydroneopterin 3'-triphosphate + formate + H(+). The protein operates within cofactor biosynthesis; 7,8-dihydroneopterin triphosphate biosynthesis; 7,8-dihydroneopterin triphosphate from GTP: step 1/1. Its function is as follows. Converts GTP to 7,8-dihydroneopterin triphosphate. This Neisseria meningitidis serogroup A / serotype 4A (strain DSM 15465 / Z2491) protein is GTP cyclohydrolase FolE2.